An 87-amino-acid polypeptide reads, in one-letter code: U14-lycotoxin-Ls1a (87 aa).

The first 20 residues, 1–20, serve as a signal peptide directing secretion; it reads MNSKVFAVLLLLALSTCVLS. The region spanning 21 to 66 is the WAP domain; the sequence is EKYCPTPRNTSCKKMNIRNNCCRDSDCTSNAFCCAEPCGNFCHKAS. 5 disulfide bridges follow: C24/C54, C32/C58, C41/C53, C42/C80, and C47/C62.

The protein belongs to the venom protein 11 family. 01 (wap-1) subfamily. In terms of processing, contains 5 disulfide bonds. As to expression, expressed by the venom gland.

The protein resides in the secreted. Its function is as follows. Has antibacterial activity. This chain is U14-lycotoxin-Ls1a, found in Lycosa singoriensis (Wolf spider).